The chain runs to 413 residues: Cardiolipin synthase B (413 aa).

PLD phosphodiesterase domains lie at 108–135 (VFRR…SSEH) and 285–312 (RRRP…DPLS). Residues histidine 113, lysine 115, aspartate 120, histidine 290, lysine 292, and aspartate 297 contribute to the active site. Residues 388–413 (TQVDPPAQPTMETQDRVETENTGVNP) form a disordered region.

Belongs to the phospholipase D family. Cardiolipin synthase subfamily. ClsB sub-subfamily.

Its subcellular location is the cell membrane. The enzyme catalyses 2 a 1,2-diacyl-sn-glycero-3-phospho-(1'-sn-glycerol) = a cardiolipin + glycerol. Functionally, catalyzes the phosphatidyl group transfer from one phosphatidylglycerol molecule to another to form cardiolipin (CL) (diphosphatidylglycerol) and glycerol. This is Cardiolipin synthase B from Shigella flexneri.